The chain runs to 459 residues: 5-hydroxytryptamine receptor 2C (459 aa).

Positions 1 to 32 (MVNLGTAVRSLLVHLIGLLVWQFDISISPVAA) are cleaved as a signal peptide. Residues 33–56 (IVTDTFNSSDGGRLFQFPDGVQNW) lie on the Extracellular side of the membrane. A helical membrane pass occupies residues 57–81 (PALSIVVIIIMTIGGNILVIMAVSM). The Cytoplasmic segment spans residues 82-87 (EKKLHN). A helical membrane pass occupies residues 88–112 (ATNYFLMSLAIADMLVGLLVMPLSL). Residues 113-129 (LAILYDYVWPLPRYLCP) lie on the Extracellular side of the membrane. The cysteines at positions 128 and 208 are disulfide-linked. Residues 130–152 (VWISLDVLFSTASIMHLCAISLD) traverse the membrane as a helical segment. Thr-140 contributes to the ergotamine binding site. Residues 152–154 (DRY) carry the DRY motif; important for ligand-induced conformation changes motif. Topologically, residues 153–168 (RYVAIRNPIEHSRFNS) are cytoplasmic. A helical membrane pass occupies residues 169 to 190 (RTKAIMKIAIVWAISIGVSVPI). The Extracellular segment spans residues 191-214 (PVIGLRDESKVFVNNTTCVLNDPN). 2 N-linked (GlcNAc...) asparagine glycosylation sites follow: Asn-204 and Asn-205. Leu-210 provides a ligand contact to ergotamine. A helical membrane pass occupies residues 215–237 (FVLIGSFVAFFIPLTIMVITYFL). Residues 238–312 (TIYVLRRQTL…AINNEKKASK (75 aa)) are Cytoplasmic-facing. The disordered stretch occupies residues 274–302 (DEEENAPNPNPDQKPRRKKKEKRPRGTMQ). Residues 288–298 (PRRKKKEKRPR) are compositionally biased toward basic residues. A helical membrane pass occupies residues 313-337 (VLGIVFFVFLIMWCPFFITNILSVL). Cys-338 and Cys-342 are oxidised to a cystine. The Extracellular segment spans residues 338 to 348 (CGKACNQKLME). The helical transmembrane segment at 349–371 (KLLNVFVWIGYVCSGINPLVYTL) threads the bilayer. An NPxxY motif; important for ligand-induced conformation changes and signaling motif is present at residues 365–369 (NPLVY). Residues 372–459 (FNKIYRRAFS…NVVSERISSV (88 aa)) lie on the Cytoplasmic side of the membrane. A PDZ-binding motif is present at residues 457-459 (SSV).

The protein belongs to the G-protein coupled receptor 1 family. In terms of assembly, interacts with MPDZ. Interacts with ARRB2. Interacts with MPP3; this interaction stabilizes the receptor at the plasma membrane and prevents the desensitization of the HTR2C receptor-mediated calcium response. Detected in brain cortex, hypothalamus, brainstem and arcuate nucleus. Detected in the paraventricular nucleus of the hypothalamus.

It localises to the cell membrane. Its function is as follows. G-protein coupled receptor for 5-hydroxytryptamine (serotonin). Also functions as a receptor for various drugs and psychoactive substances, including ergot alkaloid derivatives, 1-2,5,-dimethoxy-4-iodophenyl-2-aminopropane (DOI) and lysergic acid diethylamide (LSD). Ligand binding causes a conformation change that triggers signaling via guanine nucleotide-binding proteins (G proteins) and modulates the activity of downstream effectors. HTR2C is coupled to G(q)/G(11) G alpha proteins and activates phospholipase C-beta, releasing diacylglycerol (DAG) and inositol 1,4,5-trisphosphate (IP3) second messengers that modulate the activity of phosphatidylinositol 3-kinase and promote the release of Ca(2+) ions from intracellular stores, respectively. Beta-arrestin family members inhibit signaling via G proteins and mediate activation of alternative signaling pathways. Regulates neuronal activity via the activation of short transient receptor potential calcium channels in the brain, and thereby modulates the activation of pro-opiomelanocortin neurons and the release of CRH that then regulates the release of corticosterone. Plays a role in the regulation of appetite and eating behavior, responses to anxiogenic stimuli and stress. Plays a role in insulin sensitivity and glucose homeostasis. The protein is 5-hydroxytryptamine receptor 2C of Mus musculus (Mouse).